The chain runs to 186 residues: Elongation factor P (186 aa).

The protein belongs to the elongation factor P family.

Its subcellular location is the cytoplasm. The protein operates within protein biosynthesis; polypeptide chain elongation. In terms of biological role, involved in peptide bond synthesis. Stimulates efficient translation and peptide-bond synthesis on native or reconstituted 70S ribosomes in vitro. Probably functions indirectly by altering the affinity of the ribosome for aminoacyl-tRNA, thus increasing their reactivity as acceptors for peptidyl transferase. The sequence is that of Elongation factor P from Maridesulfovibrio salexigens (strain ATCC 14822 / DSM 2638 / NCIMB 8403 / VKM B-1763) (Desulfovibrio salexigens).